A 158-amino-acid chain; its full sequence is Small ribosomal subunit protein uS15 (158 aa).

Residues methionine 1–proline 18 are compositionally biased toward basic residues. Residues methionine 1–alanine 21 are disordered.

The protein belongs to the universal ribosomal protein uS15 family. Part of the 30S ribosomal subunit.

In Pyrococcus abyssi (strain GE5 / Orsay), this protein is Small ribosomal subunit protein uS15.